The primary structure comprises 631 residues: MPSTSFPLLETIDDPAQLRQLARAQLKVLAAELRGFVLESVSRTGGHLSSNLGTVELTVALHHVFQTPHDRLVWDVGHQTYAHKILTGRRERMHTLRQQGGISGFPQRGESVYDTFGTAHSSTSISAALGMALAAKRKGESRHTVAIIGDGAMSAGMAFEALNNAGVADCNLLVVLNDNDMSISPPVGALNRYLAQLMSGRFYAAAKNMGKTVLRPMPPLLEFAKRFEQQAKGLVVPATLFEKFGFNYIGPIDGHDLDSLIPTLDNIKGLQGPQFLHVVTKKGQGYKLAEADPVAYHGPARFDPAVGLVKSSTAPRLTFTQVFGQWLCDMAAHDERLVGITPAMREGSGMVEFEQRFPDRYYDVGIAEQHAVTFAAGMACEGAKPVVAIYSTFLQRGYDQLIHDVALQNLPVVFALDRAGLVGADGATHAGAYDIAFLRCIPNMGLACPADERECRQLLSSAYAQNHPVAVRYPRGSGAGVAPLAGLDGLPFGKGEIRRERQRQDSNAPRIAILAFGSLLYPALEAADALDATVVNMRWAKPLDDALLRQVAEGHDALVTLEEGAIMGGAGSAVTETLNAAGILRPVLQLGLADIFIEHGDPAKLLAMQGLNAAGIRAAIAARFPAIDVAR.

Thiamine diphosphate is bound by residues His78 and Ala119–Ser121. Asp150 is a Mg(2+) binding site. Residues Gly151–Ala152, Asn179, Tyr286, and Glu368 contribute to the thiamine diphosphate site. Asn179 is a binding site for Mg(2+).

The protein belongs to the transketolase family. DXPS subfamily. Homodimer. Mg(2+) is required as a cofactor. Thiamine diphosphate serves as cofactor.

It carries out the reaction D-glyceraldehyde 3-phosphate + pyruvate + H(+) = 1-deoxy-D-xylulose 5-phosphate + CO2. Its pathway is metabolic intermediate biosynthesis; 1-deoxy-D-xylulose 5-phosphate biosynthesis; 1-deoxy-D-xylulose 5-phosphate from D-glyceraldehyde 3-phosphate and pyruvate: step 1/1. Its function is as follows. Catalyzes the acyloin condensation reaction between C atoms 2 and 3 of pyruvate and glyceraldehyde 3-phosphate to yield 1-deoxy-D-xylulose-5-phosphate (DXP). The polypeptide is 1-deoxy-D-xylulose-5-phosphate synthase (Verminephrobacter eiseniae (strain EF01-2)).